The sequence spans 153 residues: 6,7-dimethyl-8-ribityllumazine synthase 1 (153 aa).

5-amino-6-(D-ribitylamino)uracil contacts are provided by residues Phe-16, 50 to 52 (AYE), and 74 to 76 (CVI). 79-80 (ET) is a (2S)-2-hydroxy-3-oxobutyl phosphate binding site. Residue His-82 is the Proton donor of the active site. Phe-107 is a 5-amino-6-(D-ribitylamino)uracil binding site. Arg-121 is a binding site for (2S)-2-hydroxy-3-oxobutyl phosphate.

The protein belongs to the DMRL synthase family.

The enzyme catalyses (2S)-2-hydroxy-3-oxobutyl phosphate + 5-amino-6-(D-ribitylamino)uracil = 6,7-dimethyl-8-(1-D-ribityl)lumazine + phosphate + 2 H2O + H(+). Its pathway is cofactor biosynthesis; riboflavin biosynthesis; riboflavin from 2-hydroxy-3-oxobutyl phosphate and 5-amino-6-(D-ribitylamino)uracil: step 1/2. Its function is as follows. Catalyzes the formation of 6,7-dimethyl-8-ribityllumazine by condensation of 5-amino-6-(D-ribitylamino)uracil with 3,4-dihydroxy-2-butanone 4-phosphate. This is the penultimate step in the biosynthesis of riboflavin. This Caulobacter vibrioides (strain ATCC 19089 / CIP 103742 / CB 15) (Caulobacter crescentus) protein is 6,7-dimethyl-8-ribityllumazine synthase 1.